We begin with the raw amino-acid sequence, 314 residues long: 2,3-dihydroxyphenylpropionate/2,3-dihydroxicinnamic acid 1,2-dioxygenase (314 aa).

H115 (proton donor) is an active-site residue. H179 (proton acceptor) is an active-site residue.

The protein belongs to the LigB/MhpB extradiol dioxygenase family. In terms of assembly, homotetramer. Fe(2+) is required as a cofactor.

It catalyses the reaction 3-(2,3-dihydroxyphenyl)propanoate + O2 = (2Z,4E)-2-hydroxy-6-oxonona-2,4-dienedioate + H(+). The enzyme catalyses (2E)-3-(2,3-dihydroxyphenyl)prop-2-enoate + O2 = (2Z,4E,7E)-2-hydroxy-6-oxonona-2,4,7-trienedioate + H(+). Its pathway is aromatic compound metabolism; 3-phenylpropanoate degradation. Catalyzes the non-heme iron(II)-dependent oxidative cleavage of 2,3-dihydroxyphenylpropionic acid and 2,3-dihydroxicinnamic acid into 2-hydroxy-6-ketononadienedioate and 2-hydroxy-6-ketononatrienedioate, respectively. This is 2,3-dihydroxyphenylpropionate/2,3-dihydroxicinnamic acid 1,2-dioxygenase from Escherichia coli (strain 55989 / EAEC).